The primary structure comprises 106 residues: Large ribosomal subunit protein eL42 (106 aa).

This sequence belongs to the eukaryotic ribosomal protein eL42 family.

This chain is Large ribosomal subunit protein eL42 (RPL44), found in Meyerozyma guilliermondii (strain ATCC 6260 / CBS 566 / DSM 6381 / JCM 1539 / NBRC 10279 / NRRL Y-324) (Yeast).